The sequence spans 164 residues: Phosphopantetheine adenylyltransferase (164 aa).

Residue serine 9 participates in substrate binding. Residues 9 to 10 (SF) and histidine 17 each bind ATP. Substrate is bound by residues lysine 41, leucine 73, and lysine 87. ATP contacts are provided by residues 88–90 (GLR), glutamate 98, and 123–129 (YSYISSS).

It belongs to the bacterial CoaD family. As to quaternary structure, homohexamer. The cofactor is Mg(2+).

It localises to the cytoplasm. The catalysed reaction is (R)-4'-phosphopantetheine + ATP + H(+) = 3'-dephospho-CoA + diphosphate. It functions in the pathway cofactor biosynthesis; coenzyme A biosynthesis; CoA from (R)-pantothenate: step 4/5. Functionally, reversibly transfers an adenylyl group from ATP to 4'-phosphopantetheine, yielding dephospho-CoA (dPCoA) and pyrophosphate. The protein is Phosphopantetheine adenylyltransferase of Clostridium perfringens (strain SM101 / Type A).